Reading from the N-terminus, the 158-residue chain is Xanthine-guanine phosphoribosyltransferase (158 aa).

Residues 38 to 39 (RG) and 90 to 98 (DDLVDTGGT) each bind 5-phospho-alpha-D-ribose 1-diphosphate. D91 contacts Mg(2+). The guanine site is built by D94 and I137. 2 residues coordinate xanthine: D94 and I137. GMP-binding positions include 94-98 (DTGGT) and 136-137 (WI).

Belongs to the purine/pyrimidine phosphoribosyltransferase family. XGPT subfamily. Homotetramer. It depends on Mg(2+) as a cofactor.

It is found in the cell inner membrane. It catalyses the reaction GMP + diphosphate = guanine + 5-phospho-alpha-D-ribose 1-diphosphate. The catalysed reaction is XMP + diphosphate = xanthine + 5-phospho-alpha-D-ribose 1-diphosphate. It carries out the reaction IMP + diphosphate = hypoxanthine + 5-phospho-alpha-D-ribose 1-diphosphate. It functions in the pathway purine metabolism; GMP biosynthesis via salvage pathway; GMP from guanine: step 1/1. Its pathway is purine metabolism; XMP biosynthesis via salvage pathway; XMP from xanthine: step 1/1. Its function is as follows. Purine salvage pathway enzyme that catalyzes the transfer of the ribosyl-5-phosphate group from 5-phospho-alpha-D-ribose 1-diphosphate (PRPP) to the N9 position of the 6-oxopurines guanine and xanthine to form the corresponding ribonucleotides GMP (guanosine 5'-monophosphate) and XMP (xanthosine 5'-monophosphate), with the release of PPi. To a lesser extent, also acts on hypoxanthine. This Buchnera aphidicola subsp. Acyrthosiphon pisum (strain APS) (Acyrthosiphon pisum symbiotic bacterium) protein is Xanthine-guanine phosphoribosyltransferase.